Here is a 280-residue protein sequence, read N- to C-terminus: Phosphonates import ATP-binding protein PhnC (280 aa).

Positions 2–245 (FELKNVTRRF…AVKEIYGTDK (244 aa)) constitute an ABC transporter domain. Position 34–41 (34–41 (GRSGAGKS)) interacts with ATP. Positions 257-280 (TSLESKRRAEDVSSGRVAKAAAVH) are disordered. The span at 260-269 (ESKRRAEDVS) shows a compositional bias: basic and acidic residues.

This sequence belongs to the ABC transporter superfamily. Phosphonates importer (TC 3.A.1.9.1) family. In terms of assembly, the complex is composed of two ATP-binding proteins (PhnC), two transmembrane proteins (PhnE) and a solute-binding protein (PhnD).

The protein resides in the cell inner membrane. The enzyme catalyses phosphonate(out) + ATP + H2O = phosphonate(in) + ADP + phosphate + H(+). In terms of biological role, part of the ABC transporter complex PhnCDE involved in phosphonates import. Responsible for energy coupling to the transport system. In Rhizobium johnstonii (strain DSM 114642 / LMG 32736 / 3841) (Rhizobium leguminosarum bv. viciae), this protein is Phosphonates import ATP-binding protein PhnC.